The chain runs to 170 residues: Lipoprotein signal peptidase (170 aa).

3 consecutive transmembrane segments (helical) span residues 13–33 (IFISILVFFDQWSKYLVVKYI), 72–92 (LFFLIIPIIILIFVFSFALKE), and 96–113 (IARIALVLILSGGIGNII). Active-site residues include D124 and D146. Residues 142-162 (FNFADSYVVIGITLFIIYDLF) traverse the membrane as a helical segment.

The protein belongs to the peptidase A8 family.

Its subcellular location is the cell inner membrane. The enzyme catalyses Release of signal peptides from bacterial membrane prolipoproteins. Hydrolyzes -Xaa-Yaa-Zaa-|-(S,diacylglyceryl)Cys-, in which Xaa is hydrophobic (preferably Leu), and Yaa (Ala or Ser) and Zaa (Gly or Ala) have small, neutral side chains.. The protein operates within protein modification; lipoprotein biosynthesis (signal peptide cleavage). Its function is as follows. This protein specifically catalyzes the removal of signal peptides from prolipoproteins. The sequence is that of Lipoprotein signal peptidase from Borrelia turicatae (strain 91E135).